A 417-amino-acid chain; its full sequence is MTELVTGKAFPYVVVTGIAMTTALATDAETTWKLLLDRQSGIRTLDDPFVEEFDLPVRIGGHLLEEFDHQLTRIELRRMGYLQRMSTVLSRRLWENAGSPEVDTNRLMVSIGTGLGSAEELVFSYDDMRARGMKAVSPLTVQKYMPNGAAAAVGLERHAKAGVMTPVSACASGAEAIARAWQQIVLGEADAAICGGVETRIEAVPIAGFAQMRIVMSTNNDDPAGACRPFDRDRDGFVFGEGGALLLIETEEHAKARGANILARIMGASITSDGFHMVAPDPNGERAGHAITRAIQLAGLAPGDIDHVNAHATGTQVGDLAEGRAINNALGGNRPAVYAPKSALGHSVGAVGAVESILTVLALRDQVIPPTLNLVNLDPEIDLDVVAGEPRPGNYRYAINNSFGFGGHNVAIAFGRY.

Residues 10–416 (FPYVVVTGIA…GHNVAIAFGR (407 aa)) form the Ketosynthase family 3 (KS3) domain. Catalysis depends on for beta-ketoacyl synthase activity residues Cys170, His311, and His346.

It belongs to the thiolase-like superfamily. Beta-ketoacyl-ACP synthases family.

It localises to the cytoplasm. It carries out the reaction an ultra-long-chain di-unsaturated fatty acyl-[ACP] + malonyl-[ACP] + H(+) = a 3-oxo-ultra-long-chain di-unsaturated fatty acyl-[ACP] + holo-[ACP] + CO2. The protein operates within lipid metabolism; mycolic acid biosynthesis. Part of the mycobacterial fatty acid elongation system FAS-II, which is involved in mycolic acid biosynthesis. Catalyzes the elongation of long chain acyl-ACP substrates by the addition of two carbons from malonyl-ACP to an acyl acceptor. Involved in extension of the mycolate chains to full lengths and produces longer chain multiunsaturated hydrocarbons averaging 54 carbons in length. In Mycobacterium bovis (strain ATCC BAA-935 / AF2122/97), this protein is 3-oxoacyl-[acyl-carrier-protein] synthase 2 (kasB).